A 417-amino-acid chain; its full sequence is Mitochondrial tRNA-specific 2-thiouridylase 1 (417 aa).

ATP-binding positions include 32–39 (AMSSGVDS) and Met-58. Residues 122 to 124 (NPD) form an interaction with target base in tRNA region. The active-site Nucleophile is the Cys-127. Cys-127 and Cys-229 form a disulfide bridge. Gly-154 contributes to the ATP binding site. The tract at residues 179–181 (KDQ) is interaction with tRNA. Cys-229 functions as the Cysteine persulfide intermediate in the catalytic mechanism. Residues 354 to 355 (RS) form an interaction with tRNA region.

It belongs to the MnmA/TRMU family.

It localises to the mitochondrion. It carries out the reaction 5-taurinomethyluridine(34) in tRNA + S-sulfanyl-L-cysteinyl-[protein] + AH2 + ATP = 5-taurinomethyl-2-thiouridine(34) in tRNA + L-cysteinyl-[protein] + A + AMP + diphosphate + H(+). Its function is as follows. Catalyzes the 2-thiolation of uridine at the wobble position (U34) of mitochondrial tRNA(Lys), tRNA(Glu) and tRNA(Gln). Required for the formation of 5-taurinomethyl-2-thiouridine (tm5s2U) of mitochondrial tRNA(Lys), tRNA(Glu), and tRNA(Gln) at the wobble position. ATP is required to activate the C2 atom of the wobble base. The protein is Mitochondrial tRNA-specific 2-thiouridylase 1 (SLM3) of Saccharomyces cerevisiae (strain ATCC 204508 / S288c) (Baker's yeast).